Here is a 372-residue protein sequence, read N- to C-terminus: Small ribosomal subunit protein mS77 (rPPR2) (372 aa).

The N-terminal 28 residues, 1–28 (MKSFLLSRQAIHRISLLSSKTPTFCRNF), are a transit peptide targeting the mitochondrion. The disordered stretch occupies residues 240 to 265 (DNSIRESETVDGEVEEEGFVPSDEVE). The segment covering 248-257 (TVDGEVEEEG) has biased composition (acidic residues).

In terms of assembly, component of the mitochondrial ribosome small subunit.

Its subcellular location is the mitochondrion. Required for karyogamy during female gametophyte development, when the two polar nuclei fuse to form the diploid central cell nucleus. The sequence is that of Small ribosomal subunit protein mS77 (rPPR2) from Arabidopsis thaliana (Mouse-ear cress).